The primary structure comprises 764 residues: PFL-like enzyme TdcE (764 aa).

One can recognise a PFL domain in the interval threonine 7–arginine 629. Catalysis depends on cysteine 423, which acts as the S-acetylcysteine intermediate. Cysteine 424 acts as the Cysteine radical intermediate in catalysis. Residues glycine 622–aspartate 645 form a disordered region. The 129-residue stretch at proline 636–leucine 764 folds into the Glycine radical domain. Glycine 739 carries the post-translational modification Glycine radical.

Belongs to the glycyl radical enzyme (GRE) family. PFL subfamily.

It localises to the cytoplasm. It catalyses the reaction 2-oxobutanoate + CoA = propanoyl-CoA + formate. The catalysed reaction is formate + acetyl-CoA = pyruvate + CoA. It functions in the pathway amino-acid degradation; L-threonine degradation via propanoate pathway; propanoate from L-threonine: step 2/4. Dependent on PFL-activase. In terms of biological role, catalyzes the cleavage of 2-ketobutyrate to propionyl-CoA and formate. It can also use pyruvate as substrate. The chain is PFL-like enzyme TdcE (tdcE) from Escherichia coli (strain K12).